The sequence spans 408 residues: Dual-specificity RNA methyltransferase RlmN (408 aa).

The Proton acceptor role is filled by E93. The Radical SAM core domain occupies 99 to 379 (ETNRGTLCIS…TTTRKTRGDD (281 aa)). C106 and C384 are oxidised to a cystine. [4Fe-4S] cluster-binding residues include C113, C117, and C120. A disordered region spans residues 152-196 (SPAGSKDGDGGPDHASRATKLDHRAADAKGVQSDSWRSSDPEEDH). Over residues 157 to 178 (KDGDGGPDHASRATKLDHRAAD) the composition is skewed to basic and acidic residues. S-adenosyl-L-methionine contacts are provided by residues 210-211 (GE), S242, 264-266 (SLH), and N341. The active-site S-methylcysteine intermediate is C384.

The protein belongs to the radical SAM superfamily. RlmN family. [4Fe-4S] cluster is required as a cofactor.

Its subcellular location is the cytoplasm. The catalysed reaction is adenosine(2503) in 23S rRNA + 2 reduced [2Fe-2S]-[ferredoxin] + 2 S-adenosyl-L-methionine = 2-methyladenosine(2503) in 23S rRNA + 5'-deoxyadenosine + L-methionine + 2 oxidized [2Fe-2S]-[ferredoxin] + S-adenosyl-L-homocysteine. It catalyses the reaction adenosine(37) in tRNA + 2 reduced [2Fe-2S]-[ferredoxin] + 2 S-adenosyl-L-methionine = 2-methyladenosine(37) in tRNA + 5'-deoxyadenosine + L-methionine + 2 oxidized [2Fe-2S]-[ferredoxin] + S-adenosyl-L-homocysteine. Its function is as follows. Specifically methylates position 2 of adenine 2503 in 23S rRNA and position 2 of adenine 37 in tRNAs. m2A2503 modification seems to play a crucial role in the proofreading step occurring at the peptidyl transferase center and thus would serve to optimize ribosomal fidelity. The chain is Dual-specificity RNA methyltransferase RlmN from Aromatoleum aromaticum (strain DSM 19018 / LMG 30748 / EbN1) (Azoarcus sp. (strain EbN1)).